Here is a 282-residue protein sequence, read N- to C-terminus: NH(3)-dependent NAD(+) synthetase (282 aa).

51–58 (GISGGVDS) serves as a coordination point for ATP. Residue aspartate 57 participates in Mg(2+) binding. Arginine 148 contacts deamido-NAD(+). Threonine 168 is an ATP binding site. Residue glutamate 173 coordinates Mg(2+). Deamido-NAD(+)-binding residues include lysine 181 and aspartate 188. The ATP site is built by lysine 197 and threonine 219. 268–269 (HK) contacts deamido-NAD(+).

This sequence belongs to the NAD synthetase family. As to quaternary structure, homodimer.

It catalyses the reaction deamido-NAD(+) + NH4(+) + ATP = AMP + diphosphate + NAD(+) + H(+). It functions in the pathway cofactor biosynthesis; NAD(+) biosynthesis; NAD(+) from deamido-NAD(+) (ammonia route): step 1/1. Functionally, catalyzes the ATP-dependent amidation of deamido-NAD to form NAD. Uses ammonia as a nitrogen source. In Burkholderia cenocepacia (strain ATCC BAA-245 / DSM 16553 / LMG 16656 / NCTC 13227 / J2315 / CF5610) (Burkholderia cepacia (strain J2315)), this protein is NH(3)-dependent NAD(+) synthetase.